A 115-amino-acid polypeptide reads, in one-letter code: Ribonuclease P protein component (115 aa).

This sequence belongs to the RnpA family. As to quaternary structure, consists of a catalytic RNA component (M1 or rnpB) and a protein subunit.

The enzyme catalyses Endonucleolytic cleavage of RNA, removing 5'-extranucleotides from tRNA precursor.. Its function is as follows. RNaseP catalyzes the removal of the 5'-leader sequence from pre-tRNA to produce the mature 5'-terminus. It can also cleave other RNA substrates such as 4.5S RNA. The protein component plays an auxiliary but essential role in vivo by binding to the 5'-leader sequence and broadening the substrate specificity of the ribozyme. This is Ribonuclease P protein component from Staphylococcus aureus (strain Mu3 / ATCC 700698).